An 836-amino-acid polypeptide reads, in one-letter code: Serine/threonine-protein kinase ATG1 (836 aa).

Residues Tyr-21 to Val-321 enclose the Protein kinase domain. ATP is bound by residues Ile-27 to Val-35 and Lys-50. Residue Asp-168 is the Proton acceptor of the active site. 3 disordered regions span residues Glu-387 to Arg-425, Asn-458 to Arg-489, and Cys-619 to Ala-642. Positions Leu-395 to Gln-404 are enriched in low complexity. Composition is skewed to polar residues over residues Arg-411–Arg-425, Asn-459–Ala-468, and Gly-630–Pro-640. An interaction with ATG13 region spans residues Ile-571 to Ser-836.

Belongs to the protein kinase superfamily. Ser/Thr protein kinase family. APG1/unc-51/ULK1 subfamily. As to quaternary structure, homodimer. Dimerization requires the presence of ATG13. Forms a ternary complex with ATG13 and ATG17.

The protein resides in the cytoplasm. Its subcellular location is the preautophagosomal structure membrane. The enzyme catalyses L-seryl-[protein] + ATP = O-phospho-L-seryl-[protein] + ADP + H(+). The catalysed reaction is L-threonyl-[protein] + ATP = O-phospho-L-threonyl-[protein] + ADP + H(+). Serine/threonine protein kinase involved in the cytoplasm to vacuole transport (Cvt) and found to be essential in autophagy, where it is required for the formation of autophagosomes. Involved in the clearance of protein aggregates which cannot be efficiently cleared by the proteasome. Required for selective autophagic degradation of the nucleus (nucleophagy) as well as for mitophagy which contributes to regulate mitochondrial quantity and quality by eliminating the mitochondria to a basal level to fulfill cellular energy requirements and preventing excess ROS production. Also involved in endoplasmic reticulum-specific autophagic process, in selective removal of ER-associated degradation (ERAD) substrates. Plays a key role in ATG9 and ATG23 cycling through the pre-autophagosomal structure and is necessary to promote ATG18 binding to ATG9 through phosphorylation of ATG9. Catalyzes phosphorylation of ATG4, decreasing the interaction between ATG4 and ATG8 and impairing deconjugation of PE-conjugated forms of ATG8. This is Serine/threonine-protein kinase ATG1 from Kluyveromyces marxianus (strain DMKU3-1042 / BCC 29191 / NBRC 104275) (Yeast).